Here is a 130-residue protein sequence, read N- to C-terminus: Small ribosomal subunit protein uS9 (130 aa).

The protein belongs to the universal ribosomal protein uS9 family.

The protein is Small ribosomal subunit protein uS9 of Streptococcus pyogenes serotype M1.